A 192-amino-acid chain; its full sequence is 3-hydroxyanthranilate 3,4-dioxygenase (192 aa).

An O2-binding site is contributed by R50. Fe cation is bound by residues H54, E60, and H102. E60 is a binding site for substrate. Residues R106 and E116 each contribute to the substrate site. The a divalent metal cation site is built by C131, C134, C168, and C171.

It belongs to the 3-HAO family. Requires Fe(2+) as cofactor.

It is found in the cytoplasm. The enzyme catalyses 3-hydroxyanthranilate + O2 = (2Z,4Z)-2-amino-3-carboxymuconate 6-semialdehyde. It functions in the pathway cofactor biosynthesis; NAD(+) biosynthesis; quinolinate from L-kynurenine: step 3/3. Its function is as follows. Catalyzes the oxidative ring opening of 3-hydroxyanthranilate to 2-amino-3-carboxymuconate semialdehyde, which spontaneously cyclizes to quinolinate. The sequence is that of 3-hydroxyanthranilate 3,4-dioxygenase from Coccidioides immitis (strain RS) (Valley fever fungus).